The following is a 475-amino-acid chain: BICD family-like cargo adapter 2 (475 aa).

Residues 56 to 275 (ELGKALLERN…LKELQDELHM (220 aa)) are a coiled coil. Polar residues-rich tracts occupy residues 286–300 (HSSL…TAVQ) and 308–318 (SAETQSITSGY). The disordered stretch occupies residues 286–318 (HSSLHSEIQQSTAVQNHEKGRNSAETQSITSGY). Positions 340 to 413 (RLQDQVTMQH…ESLNLQLLST (74 aa)) form a coiled coil. Residues 440 to 450 (QSQKQQETQKP) are compositionally biased toward low complexity. The segment at 440–459 (QSQKQQETQKPPESPQNSFL) is disordered.

This sequence belongs to the BICDR family.

In Xenopus tropicalis (Western clawed frog), this protein is BICD family-like cargo adapter 2 (bicdl2).